We begin with the raw amino-acid sequence, 236 residues long: 2-C-methyl-D-erythritol 4-phosphate cytidylyltransferase (236 aa).

This sequence belongs to the IspD/TarI cytidylyltransferase family. IspD subfamily. Homodimer.

It carries out the reaction 2-C-methyl-D-erythritol 4-phosphate + CTP + H(+) = 4-CDP-2-C-methyl-D-erythritol + diphosphate. It participates in isoprenoid biosynthesis; isopentenyl diphosphate biosynthesis via DXP pathway; isopentenyl diphosphate from 1-deoxy-D-xylulose 5-phosphate: step 2/6. Its function is as follows. Catalyzes the formation of 4-diphosphocytidyl-2-C-methyl-D-erythritol from CTP and 2-C-methyl-D-erythritol 4-phosphate (MEP). The polypeptide is 2-C-methyl-D-erythritol 4-phosphate cytidylyltransferase (Salmonella paratyphi A (strain ATCC 9150 / SARB42)).